Here is a 375-residue protein sequence, read N- to C-terminus: MAKADFYETLGVAKSADEKELKSAFRKLAMKYHPDKNPDDKDAERKFKEINEAYEMLKDPQKRAAYDRYGHAAFEHGGMGGGGGGFAGGGFSDIFEDIFGEMMGGGRARQRSSGGRERGADLRYNMEITLEEAFSGKTAQIRVPTSITCDVCSGSGAKPGTQPKNCGTCQGSGRVRAAQGFFSIERTCPTCHGRGQIIPDPCPKCHGQGRVTEERSLSVNIPAGIEDGTRIRLQGEGEAGARGGPAGDLYIFLSVKPHEFYQRDGADLYCAVPISMTTAALGGTFDVATLDGTKSRVTVPEGTQAGKQFRLKSKGMPVLRSAQTGDLYIQIQIETPQKLTKRQRELLQEFEQISSKENNPESTGFFARMKEFFEG.

Residues Asp-5 to Gly-70 form the J domain. The CR-type zinc-finger motif lies at Gly-136–Glu-214. Residues Cys-149, Cys-152, Cys-166, Cys-169, Cys-188, Cys-191, Cys-202, and Cys-205 each coordinate Zn(2+). CXXCXGXG motif repeat units lie at residues Cys-149–Gly-156, Cys-166–Gly-173, Cys-188–Gly-195, and Cys-202–Gly-209.

Belongs to the DnaJ family. As to quaternary structure, homodimer. Zn(2+) serves as cofactor.

The protein resides in the cytoplasm. Participates actively in the response to hyperosmotic and heat shock by preventing the aggregation of stress-denatured proteins and by disaggregating proteins, also in an autonomous, DnaK-independent fashion. Unfolded proteins bind initially to DnaJ; upon interaction with the DnaJ-bound protein, DnaK hydrolyzes its bound ATP, resulting in the formation of a stable complex. GrpE releases ADP from DnaK; ATP binding to DnaK triggers the release of the substrate protein, thus completing the reaction cycle. Several rounds of ATP-dependent interactions between DnaJ, DnaK and GrpE are required for fully efficient folding. Also involved, together with DnaK and GrpE, in the DNA replication of plasmids through activation of initiation proteins. In Rhizobium etli (strain CIAT 652), this protein is Chaperone protein DnaJ.